A 64-amino-acid chain; its full sequence is Large ribosomal subunit protein bL28 (64 aa).

The protein belongs to the bacterial ribosomal protein bL28 family.

This is Large ribosomal subunit protein bL28 from Bifidobacterium adolescentis (strain ATCC 15703 / DSM 20083 / NCTC 11814 / E194a).